Here is a 98-residue protein sequence, read N- to C-terminus: NADH-ubiquinone oxidoreductase chain 4L (98 aa).

3 helical membrane passes run 1–21 (MSMVYINIFLAFTLSFMGLLI), 29–49 (SLLCLEGMMLSLFVLMTVTIL), and 61–81 (IILLVFAACEAALGLSLLVMV).

It belongs to the complex I subunit 4L family. In terms of assembly, core subunit of respiratory chain NADH dehydrogenase (Complex I) which is composed of 45 different subunits.

The protein resides in the mitochondrion inner membrane. It carries out the reaction a ubiquinone + NADH + 5 H(+)(in) = a ubiquinol + NAD(+) + 4 H(+)(out). Core subunit of the mitochondrial membrane respiratory chain NADH dehydrogenase (Complex I) which catalyzes electron transfer from NADH through the respiratory chain, using ubiquinone as an electron acceptor. Part of the enzyme membrane arm which is embedded in the lipid bilayer and involved in proton translocation. The protein is NADH-ubiquinone oxidoreductase chain 4L (MT-ND4L) of Taxidea taxus (American badger).